The sequence spans 132 residues: Small ribosomal subunit protein uS8 (132 aa).

Belongs to the universal ribosomal protein uS8 family. In terms of assembly, part of the 30S ribosomal subunit. Contacts proteins S5 and S12.

Its function is as follows. One of the primary rRNA binding proteins, it binds directly to 16S rRNA central domain where it helps coordinate assembly of the platform of the 30S subunit. In Mycolicibacterium smegmatis (strain ATCC 700084 / mc(2)155) (Mycobacterium smegmatis), this protein is Small ribosomal subunit protein uS8.